A 1170-amino-acid polypeptide reads, in one-letter code: Chromosome partition protein Smc (1170 aa).

ATP is bound at residue proline 32 to asparagine 39. 3 coiled-coil regions span residues glycine 169 to alanine 215, aspartate 245 to alanine 365, and glutamate 401 to lysine 508. The SMC hinge domain maps to alanine 520–alanine 623. Coiled-coil stretches lie at residues glutamine 664 to leucine 944 and glutamate 983 to threonine 1020.

It belongs to the SMC family. Homodimer.

It localises to the cytoplasm. Required for chromosome condensation and partitioning. The protein is Chromosome partition protein Smc of Burkholderia pseudomallei (strain 1710b).